The primary structure comprises 235 residues: 5'-methylthioadenosine/S-adenosylhomocysteine nucleosidase (235 aa).

Residue glutamate 12 is the Proton acceptor of the active site. Substrate is bound by residues glycine 78, isoleucine 152, and 173–174 (ME). Residue aspartate 197 is the Proton donor of the active site.

This sequence belongs to the PNP/UDP phosphorylase family. MtnN subfamily. In terms of assembly, homodimer.

The enzyme catalyses S-adenosyl-L-homocysteine + H2O = S-(5-deoxy-D-ribos-5-yl)-L-homocysteine + adenine. It catalyses the reaction S-methyl-5'-thioadenosine + H2O = 5-(methylsulfanyl)-D-ribose + adenine. It carries out the reaction 5'-deoxyadenosine + H2O = 5-deoxy-D-ribose + adenine. It functions in the pathway amino-acid biosynthesis; L-methionine biosynthesis via salvage pathway; S-methyl-5-thio-alpha-D-ribose 1-phosphate from S-methyl-5'-thioadenosine (hydrolase route): step 1/2. Its function is as follows. Catalyzes the irreversible cleavage of the glycosidic bond in both 5'-methylthioadenosine (MTA) and S-adenosylhomocysteine (SAH/AdoHcy) to adenine and the corresponding thioribose, 5'-methylthioribose and S-ribosylhomocysteine, respectively. Also cleaves 5'-deoxyadenosine, a toxic by-product of radical S-adenosylmethionine (SAM) enzymes, into 5-deoxyribose and adenine. Thus, is required for in vivo function of the radical SAM enzymes biotin synthase and lipoic acid synthase, that are inhibited by 5'-deoxyadenosine accumulation. The polypeptide is 5'-methylthioadenosine/S-adenosylhomocysteine nucleosidase (Buchnera aphidicola subsp. Schizaphis graminum (strain Sg)).